Consider the following 158-residue polypeptide: Large ribosomal subunit protein uL15 (158 aa).

Disordered stretches follow at residues 1–53 and 138–158; these read MRIH…FEGG and ESAG…SNNE. Gly residues predominate over residues 23 to 35; it reads ISAGQGASGGFGM. Over residues 145–158 the composition is skewed to polar residues; sequence QDLSDTSNAPSNNE.

The protein belongs to the universal ribosomal protein uL15 family. Part of the 50S ribosomal subunit.

Its function is as follows. Binds to the 23S rRNA. The sequence is that of Large ribosomal subunit protein uL15 from Crocosphaera subtropica (strain ATCC 51142 / BH68) (Cyanothece sp. (strain ATCC 51142)).